Consider the following 662-residue polypeptide: 3',5'-cyclic-AMP phosphodiesterase, isoform F (662 aa).

Disordered stretches follow at residues 79–108 (VPAS…LSQG) and 207–245 (SAGQ…RLPT). Over residues 80–98 (PASNKSRRPNQSSSASRSG) the composition is skewed to polar residues. A PDEase domain is found at 248–577 (VETPRENELG…DYYQSMIPPS (330 aa)). His-324 (proton donor) is an active-site residue. Position 324 to 328 (324 to 328 (HNSLH)) interacts with 3',5'-cyclic AMP. A divalent metal cation contacts are provided by His-328, His-364, Asp-365, and Asp-482. 3 residues coordinate 3',5'-cyclic AMP: Asp-365, Asp-482, and Gln-533. Acidic residues predominate over residues 599–616 (EESDQENLAELEEGDESG). The disordered stretch occupies residues 599-662 (EESDQENLAE…CQNQPQHGGM (64 aa)). Residues 617–634 (GESTTTGTTGTTAASALS) are compositionally biased toward low complexity. A compositionally biased stretch (gly residues) spans 635–646 (GAGGGGGGGGGM). Residues 652-662 (GCQNQPQHGGM) show a composition bias toward polar residues.

The protein belongs to the cyclic nucleotide phosphodiesterase family. PDE4 subfamily. Monomer. It depends on a divalent metal cation as a cofactor.

The catalysed reaction is 3',5'-cyclic AMP + H2O = AMP + H(+). It functions in the pathway purine metabolism; 3',5'-cyclic AMP degradation; AMP from 3',5'-cyclic AMP: step 1/1. In terms of biological role, hydrolyzes the second messenger cAMP, which is a key regulator of many important physiological processes. Vital for female fertility. Required for learning/memory. This is 3',5'-cyclic-AMP phosphodiesterase, isoform F from Drosophila melanogaster (Fruit fly).